Here is a 297-residue protein sequence, read N- to C-terminus: Transmembrane protein 178A (297 aa).

Positions 1 to 25 (MEPRALVTALSLGLSLCSLGLLVTA) are cleaved as a signal peptide. Over 26 to 179 (IFTDHWYETD…LLHLRRITAG (154 aa)) the chain is Extracellular. The span at 41 to 57 (ESCERSRAGADPPDQKN) shows a compositional bias: basic and acidic residues. The segment at 41 to 86 (ESCERSRAGADPPDQKNRLMPLSHLPLRDSPPLGRRLLPGGPGRSD) is disordered. Residues 68-79 (RDSPPLGRRLLP) are compositionally biased toward low complexity. Residue Asn158 is glycosylated (N-linked (GlcNAc...) asparagine). The helical transmembrane segment at 180–200 (FLGMAVAVLLCGCIVATVSFF) threads the bilayer. Residues 201-208 (WEESLTQH) lie on the Cytoplasmic side of the membrane. Residues 209-229 (VAGLLFLMTGIFCTISLCTYA) form a helical membrane-spanning segment. At 230–257 (ASVSYDLNRVPKLIYSLPHDVEHGYSWS) the chain is on the extracellular side. The helical transmembrane segment at 258–278 (IFCAWCSLGFIVAAGGLCIAY) threads the bilayer. Over 279 to 297 (PFISRTKIAHLKSGRDSTV) the chain is Cytoplasmic.

This sequence belongs to the TMEM178 family. Interacts with STIM1. In terms of tissue distribution, highly expressed in the bone and its expression increases during osteoclastogenesis.

It is found in the endoplasmic reticulum membrane. Acts as a negative regulator of osteoclast differentiation in basal and inflammatory conditions by regulating TNFSF11-induced Ca (2+) fluxes, thereby controlling the induction of NFATC1. In Mus musculus (Mouse), this protein is Transmembrane protein 178A (Tmem178a).